A 341-amino-acid chain; its full sequence is Phosphate acyltransferase (341 aa).

The protein belongs to the PlsX family. As to quaternary structure, homodimer. Probably interacts with PlsY.

Its subcellular location is the cytoplasm. The enzyme catalyses a fatty acyl-[ACP] + phosphate = an acyl phosphate + holo-[ACP]. It participates in lipid metabolism; phospholipid metabolism. Its function is as follows. Catalyzes the reversible formation of acyl-phosphate (acyl-PO(4)) from acyl-[acyl-carrier-protein] (acyl-ACP). This enzyme utilizes acyl-ACP as fatty acyl donor, but not acyl-CoA. In Lacticaseibacillus casei (strain BL23) (Lactobacillus casei), this protein is Phosphate acyltransferase.